Here is a 361-residue protein sequence, read N- to C-terminus: Phospho-N-acetylmuramoyl-pentapeptide-transferase (361 aa).

10 helical membrane passes run 28-48 (LAVL…IKFL), 74-94 (TMGG…LADL), 99-119 (IWIT…DDYA), 135-155 (LLLQ…TIDS), 167-187 (SLSM…IVGA), 203-223 (VPIA…GNLI), 236-256 (TGEL…FLWF), 263-283 (VFMG…ISVI), 288-308 (IVLG…IMQV), and 338-358 (KVVI…LSSL).

The protein belongs to the glycosyltransferase 4 family. MraY subfamily. Mg(2+) serves as cofactor.

The protein localises to the cell inner membrane. The catalysed reaction is UDP-N-acetyl-alpha-D-muramoyl-L-alanyl-gamma-D-glutamyl-meso-2,6-diaminopimeloyl-D-alanyl-D-alanine + di-trans,octa-cis-undecaprenyl phosphate = di-trans,octa-cis-undecaprenyl diphospho-N-acetyl-alpha-D-muramoyl-L-alanyl-D-glutamyl-meso-2,6-diaminopimeloyl-D-alanyl-D-alanine + UMP. Its pathway is cell wall biogenesis; peptidoglycan biosynthesis. Catalyzes the initial step of the lipid cycle reactions in the biosynthesis of the cell wall peptidoglycan: transfers peptidoglycan precursor phospho-MurNAc-pentapeptide from UDP-MurNAc-pentapeptide onto the lipid carrier undecaprenyl phosphate, yielding undecaprenyl-pyrophosphoryl-MurNAc-pentapeptide, known as lipid I. This Rickettsia bellii (strain OSU 85-389) protein is Phospho-N-acetylmuramoyl-pentapeptide-transferase.